A 120-amino-acid chain; its full sequence is UPF0091 protein PH1455 (120 aa).

The protein belongs to the UPF0091 family.

This chain is UPF0091 protein PH1455, found in Pyrococcus horikoshii (strain ATCC 700860 / DSM 12428 / JCM 9974 / NBRC 100139 / OT-3).